The primary structure comprises 497 residues: Acetyltransferase FGR3 (497 aa).

Ca(2+) is bound by residues aspartate 221 and isoleucine 224. Lysine 255 and aspartate 303 together coordinate CoA. Aspartate 386 lines the Ca(2+) pocket. Threonine 396 provides a ligand contact to CoA. Residue aspartate 462 participates in Ca(2+) binding. Positions 477-497 are disordered; the sequence is DASEAKKANGTNGTNGVNGSS. Over residues 485 to 497 the composition is skewed to low complexity; sequence NGTNGTNGVNGSS.

The protein belongs to the trichothecene 3-O-acetyltransferase family.

It functions in the pathway secondary metabolite biosynthesis. Functionally, acetyltransferase; part of the gene cluster that mediates the biosynthesis of the tetraketides fugralins such as linear fugralin A and cyclic fugralin B, volatile compounds that play a role in the asexual reproductive cycle but are not involved in pathogenicity. One of the key features of fugralins is the presence of a double methyl group, which is only rarely encountered in fungal secondary metabolites. As the fugralins cluster does not contain an independent methyltransferase, the PKS FGR1 is probably responsible for adding two methyl groups to the same carbon atom. Fugralin B is similar to fugralin A except for a cyclization between the carboxylic acid C-8 and the alcohol on C-4 resulting in a six membered lactone ring, probably catalyzed by the cyclase FGR4. The exact role of the individual cluster genes remains unknown and further work is needed to unravel the biosynthetic pathway. This Gibberella zeae (strain ATCC MYA-4620 / CBS 123657 / FGSC 9075 / NRRL 31084 / PH-1) (Wheat head blight fungus) protein is Acetyltransferase FGR3.